Here is a 376-residue protein sequence, read N- to C-terminus: Lipid-A-disaccharide synthase (376 aa).

Belongs to the LpxB family.

The catalysed reaction is a lipid X + a UDP-2-N,3-O-bis[(3R)-3-hydroxyacyl]-alpha-D-glucosamine = a lipid A disaccharide + UDP + H(+). It participates in bacterial outer membrane biogenesis; LPS lipid A biosynthesis. In terms of biological role, condensation of UDP-2,3-diacylglucosamine and 2,3-diacylglucosamine-1-phosphate to form lipid A disaccharide, a precursor of lipid A, a phosphorylated glycolipid that anchors the lipopolysaccharide to the outer membrane of the cell. The chain is Lipid-A-disaccharide synthase from Coxiella burnetii (strain Dugway 5J108-111).